A 280-amino-acid polypeptide reads, in one-letter code: Four and a half LIM domains protein 1 (280 aa).

S2 carries the post-translational modification N-acetylserine. At K4 the chain carries N6-acetyllysine. The segment at C7–C31 adopts a C4-type zinc-finger fold. LIM zinc-binding domains follow at residues C40–C92, C101–C153, C162–C212, and C221–C276. Residue K86 forms a Glycyl lysine isopeptide (Lys-Gly) (interchain with G-Cter in SUMO2) linkage.

The protein resides in the cytoplasm. May have an involvement in muscle development or hypertrophy. Isoform 2 binds to RBP-J and plays a negative regulatory role in the RBP-J-mediated transcription in mammalian systems. The polypeptide is Four and a half LIM domains protein 1 (Fhl1) (Rattus norvegicus (Rat)).